The following is a 327-amino-acid chain: Glycerol-3-phosphate dehydrogenase [NAD(P)+] (327 aa).

The NADPH site is built by Phe13, Arg34, and Lys107. Residues Lys107 and Gly135 each contribute to the sn-glycerol 3-phosphate site. Ala139 contacts NADPH. Residues Lys190, Asp243, Ser253, Arg254, and Asn255 each coordinate sn-glycerol 3-phosphate. The active-site Proton acceptor is the Lys190. Position 254 (Arg254) interacts with NADPH. Positions 276 and 277 each coordinate NADPH.

This sequence belongs to the NAD-dependent glycerol-3-phosphate dehydrogenase family.

The protein localises to the cytoplasm. It carries out the reaction sn-glycerol 3-phosphate + NAD(+) = dihydroxyacetone phosphate + NADH + H(+). The catalysed reaction is sn-glycerol 3-phosphate + NADP(+) = dihydroxyacetone phosphate + NADPH + H(+). It functions in the pathway membrane lipid metabolism; glycerophospholipid metabolism. Functionally, catalyzes the reduction of the glycolytic intermediate dihydroxyacetone phosphate (DHAP) to sn-glycerol 3-phosphate (G3P), the key precursor for phospholipid synthesis. This chain is Glycerol-3-phosphate dehydrogenase [NAD(P)+], found in Rhizobium etli (strain ATCC 51251 / DSM 11541 / JCM 21823 / NBRC 15573 / CFN 42).